The sequence spans 124 residues: Probable cytochrome b5 1 (124 aa).

The region spanning 3–79 is the Cytochrome b5 heme-binding domain; that stretch reads VKYFEPEEIV…LEEMYIGDLK (77 aa). Heme contacts are provided by histidine 38 and histidine 62. Residues 100 to 120 form a helical membrane-spanning segment; sequence PPLPLLIALIVLPAIAVIVFV.

The protein belongs to the cytochrome b5 family.

It is found in the endoplasmic reticulum membrane. The protein localises to the microsome membrane. Membrane bound hemoprotein which function as an electron carrier for several membrane bound oxygenases. In Schizosaccharomyces pombe (strain 972 / ATCC 24843) (Fission yeast), this protein is Probable cytochrome b5 1.